The primary structure comprises 181 residues: Cyclic AMP-dependent transcription factor ATF-3 (181 aa).

The tract at residues 73-97 (EMSVTKSEAAPEEDERKRRRRERNK) is disordered. Lys78 participates in a covalent cross-link: Glycyl lysine isopeptide (Lys-Gly) (interchain with G-Cter in SUMO2). Residues 86–149 (DERKRRRRER…QHLIYMLNLH (64 aa)) form the bZIP domain. The tract at residues 88-110 (RKRRRRERNKIAAAKCRNKKKEK) is basic motif. A leucine-zipper region spans residues 114-142 (LQKESEKLESVNAELKAQIEELKNEKQHL). Position 162 is a phosphothreonine (Thr162). Residue Lys175 forms a Glycyl lysine isopeptide (Lys-Gly) (interchain with G-Cter in SUMO2) linkage.

Belongs to the bZIP family. ATF subfamily. Binds DNA as a homodimer or a heterodimer. Interacts with KAT5; promoting KAT5 autoacetylation and KAT5 deubiquitination by USP7.

Its subcellular location is the nucleus. Functionally, this protein binds the cAMP response element (CRE) (consensus: 5'-GTGACGT[AC][AG]-3'), a sequence present in many viral and cellular promoters. Represses transcription from promoters with ATF sites. It may repress transcription by stabilizing the binding of inhibitory cofactors at the promoter. The polypeptide is Cyclic AMP-dependent transcription factor ATF-3 (Mus musculus (Mouse)).